The primary structure comprises 348 residues: Heat-inducible transcription repressor HrcA (348 aa).

The protein belongs to the HrcA family.

In terms of biological role, negative regulator of class I heat shock genes (grpE-dnaK-dnaJ and groELS operons). Prevents heat-shock induction of these operons. In Syntrophobacter fumaroxidans (strain DSM 10017 / MPOB), this protein is Heat-inducible transcription repressor HrcA.